The chain runs to 229 residues: tRNA (guanine-N(7)-)-methyltransferase (229 aa).

Glutamate 62, glutamate 87, aspartate 114, and aspartate 137 together coordinate S-adenosyl-L-methionine. Residue aspartate 137 is part of the active site. Lysine 141 contacts substrate. Positions lysine 143–arginine 148 are interaction with RNA. Substrate contacts are provided by residues aspartate 173 and threonine 208–glutamate 211.

This sequence belongs to the class I-like SAM-binding methyltransferase superfamily. TrmB family.

The catalysed reaction is guanosine(46) in tRNA + S-adenosyl-L-methionine = N(7)-methylguanosine(46) in tRNA + S-adenosyl-L-homocysteine. The protein operates within tRNA modification; N(7)-methylguanine-tRNA biosynthesis. Catalyzes the formation of N(7)-methylguanine at position 46 (m7G46) in tRNA. The protein is tRNA (guanine-N(7)-)-methyltransferase of Francisella philomiragia subsp. philomiragia (strain ATCC 25017 / CCUG 19701 / FSC 153 / O#319-036).